The sequence spans 273 residues: Endoplasmic reticulum resident protein 27 (273 aa).

The signal sequence occupies residues 1–25; the sequence is MEAAPSRFMFLLFLLTCELAAEVAA. One can recognise a Thioredoxin domain in the interval 39 to 152; that stretch reads EPTWLTDVPA…MVTEYNPVTV (114 aa). N-linked (GlcNAc...) asparagine glycosylation is present at Asn100. Positions 230–233 are PDIA3-binding site; the sequence is DEWD. The short motif at 270 to 273 is the Prevents secretion from ER element; it reads KVEL.

It belongs to the protein disulfide isomerase family. In terms of assembly, interacts with PDIA3.

The protein localises to the endoplasmic reticulum lumen. Specifically binds unfolded proteins and may recruit protein disulfide isomerase PDIA3 to unfolded substrates. Binds protein substrates via a hydrophobic pocket in the C-terminal domain. May play a role in the unfolded stress response. The protein is Endoplasmic reticulum resident protein 27 (ERP27) of Homo sapiens (Human).